Reading from the N-terminus, the 362-residue chain is E3 ubiquitin-protein ligase TM129 (362 aa).

The Lumenal portion of the chain corresponds to 1–6 (MESPEV). Residues 7 to 27 (TFTLAYVVFSVCFVFTPNEFH) traverse the membrane as a helical segment. Over 28–56 (SAGITVQNLLSGWLGSEDVAFVHYHIRRS) the chain is Cytoplasmic. Residues 57–77 (TATLLTHSLLPMGYFIGMCFA) traverse the membrane as a helical segment. At 78–94 (APEKELYNVYKAADGWK) the chain is on the lumenal side. Residues 95-115 (VFVLITVLLPVTTSILAFYWS) form a helical membrane-spanning segment. The Cytoplasmic segment spans residues 116-362 (QKRWGNHPLA…FCIVDVCIVR (247 aa)). Residues 285-350 (CIGCMQTNAN…SSHVPCPTCR (66 aa)) form an RING-type; degenerate zinc finger.

It belongs to the TMEM129 family. In terms of assembly, integral component of ER-resident dislocation complexes.

The protein resides in the endoplasmic reticulum membrane. It catalyses the reaction S-ubiquitinyl-[E2 ubiquitin-conjugating enzyme]-L-cysteine + [acceptor protein]-L-lysine = [E2 ubiquitin-conjugating enzyme]-L-cysteine + N(6)-ubiquitinyl-[acceptor protein]-L-lysine.. Its pathway is protein modification; protein ubiquitination. Functionally, E3 ubiquitin-protein ligase involved in ER-associated protein degradation, preferentially associates with the E2 enzyme UBE2J2. The chain is E3 ubiquitin-protein ligase TM129 (tmem129) from Xenopus tropicalis (Western clawed frog).